The sequence spans 191 residues: Thymidine kinase (191 aa).

ATP-binding positions include glycine 9 to threonine 16 and aspartate 85 to glutamine 88. The active-site Proton acceptor is glutamate 86. Zn(2+) is bound by residues cysteine 143, cysteine 146, cysteine 181, and cysteine 184.

It belongs to the thymidine kinase family. As to quaternary structure, homotetramer.

It localises to the cytoplasm. It carries out the reaction thymidine + ATP = dTMP + ADP + H(+). The polypeptide is Thymidine kinase (Listeria monocytogenes serotype 4b (strain F2365)).